The following is a 151-amino-acid chain: ALK and LTK ligand 2 (151 aa).

The signal sequence occupies residues 1–25 (MRVSGRPMLLALLLLLSTVGDRGRA). 2 disulfide bridges follow: cysteine 112–cysteine 148 and cysteine 126–cysteine 135.

It belongs to the ALKAL family. In terms of assembly, homodimer.

It localises to the secreted. The protein localises to the cell membrane. In terms of biological role, cytokine that acts as a physiological ligand for receptor tyrosine kinases LTK and ALK, leading to their activation. Cytokine-binding is sufficient to activate LTK. In contrast, ALKAL2-driven activation of ALK is coupled with heparin-binding to ALK. Stimulation of ALK signaling is involved in neural development and regulation of energy expenditure. The sequence is that of ALK and LTK ligand 2 from Mus musculus (Mouse).